A 496-amino-acid chain; its full sequence is ATP synthase subunit beta, chloroplastic (496 aa).

ATP is bound at residue 170–177 (GGAGVGKT).

Belongs to the ATPase alpha/beta chains family. In terms of assembly, F-type ATPases have 2 components, CF(1) - the catalytic core - and CF(0) - the membrane proton channel. CF(1) has five subunits: alpha(3), beta(3), gamma(1), delta(1), epsilon(1). CF(0) has four main subunits: a(1), b(1), b'(1) and c(9-12).

The protein resides in the plastid. Its subcellular location is the chloroplast thylakoid membrane. It carries out the reaction ATP + H2O + 4 H(+)(in) = ADP + phosphate + 5 H(+)(out). Produces ATP from ADP in the presence of a proton gradient across the membrane. The catalytic sites are hosted primarily by the beta subunits. The protein is ATP synthase subunit beta, chloroplastic of Trachycarpus fortunei (Chinese windmill palm).